Reading from the N-terminus, the 212-residue chain is Hemagglutinin 2 (212 aa).

Its subcellular location is the secreted. Induces agglutination of neuraminidase-treated erythrocytes. The polypeptide is Hemagglutinin 2 (hag2) (Eikenella corrodens).